Reading from the N-terminus, the 91-residue chain is Protein LURE 1.3 (91 aa).

A signal peptide spans 1 to 20; the sequence is MKLPFIFLITLLIFVSSCTS. N-linked (GlcNAc...) asparagine glycosylation occurs at Asn-24. 3 disulfides stabilise this stretch: Cys-59/Cys-76, Cys-62/Cys-83, and Cys-66/Cys-85. The tract at residues 68–88 is PRK6 binding; that stretch reads RRGKYIRTCSFERKLCRCSIS.

Belongs to the DEFL family. In terms of assembly, binds to PRK6 LRRs. Expressed in the pistil. Detected exclusively in the synergid cells.

Its subcellular location is the secreted. In terms of biological role, pollen tube attractants guiding pollen tubes to the ovular micropyle. Attracts pollen tubes from both A.thaliana and A.lyrata. The protein is Protein LURE 1.3 of Arabidopsis thaliana (Mouse-ear cress).